The primary structure comprises 474 residues: 3-isopropylmalate dehydratase large subunit (474 aa).

[4Fe-4S] cluster is bound by residues Cys355, Cys415, and Cys418.

Belongs to the aconitase/IPM isomerase family. LeuC type 1 subfamily. In terms of assembly, heterodimer of LeuC and LeuD. [4Fe-4S] cluster serves as cofactor.

It carries out the reaction (2R,3S)-3-isopropylmalate = (2S)-2-isopropylmalate. It functions in the pathway amino-acid biosynthesis; L-leucine biosynthesis; L-leucine from 3-methyl-2-oxobutanoate: step 2/4. In terms of biological role, catalyzes the isomerization between 2-isopropylmalate and 3-isopropylmalate, via the formation of 2-isopropylmaleate. This is 3-isopropylmalate dehydratase large subunit from Shewanella putrefaciens (strain CN-32 / ATCC BAA-453).